The sequence spans 194 residues: Protein LKAAEAR1 (194 aa).

Residues 1–45 (MPPPAKEGGRKGPRERSGKSAPGTAQGEERAKGAPATEPPKPGWA) form a disordered region. Basic and acidic residues predominate over residues 7 to 18 (EGGRKGPRERSG).

The sequence is that of Protein LKAAEAR1 (LKAAEAR1) from Homo sapiens (Human).